Consider the following 570-residue polypeptide: Ferroportin (570 aa).

Residues 1–23 are Cytoplasmic-facing; that stretch reads MTKSRDQTHQEGCCGSLANYLTS. The chain crosses the membrane as a helical span at residues 24–53; sequence AKFLLYLGHSLSTWGDRMWHFAVSVFLVEL. Residues D39 and H43 each contribute to the Fe cation site. The Extracellular segment spans residues 54–57; the sequence is YGNS. The helical transmembrane segment at 58 to 84 threads the bilayer; sequence LLLTAVYGLVVAGSVLVLGAIIGDWVD. At 85 to 87 the chain is on the cytoplasmic side; the sequence is KNA. The chain crosses the membrane as a helical span at residues 88 to 118; it reads RLKVAQTSLVVQNVSVILCGIILMMVFLHKN. Residues 119 to 126 lie on the Extracellular side of the membrane; that stretch reads ELLNMYHG. The helical transmembrane segment at 127–162 threads the bilayer; sequence WVLTVCYILIITIANIANLASTATAITIQRDWIVVV. Residues 163–164 lie on the Cytoplasmic side of the membrane; sequence AG. Residues 165–195 traverse the membrane as a helical segment; sequence ENRSRLADMNATIRRIDQLTNILAPMAVGQI. At 196–202 the chain is on the extracellular side; that stretch reads MTFGSPV. Residues 203-229 form a helical membrane-spanning segment; sequence IGCGFISGWNLVSMCVEYFLLWKVYQK. Residues 230-306 are Cytoplasmic-facing; that stretch reads TPALAVKAAL…DGWVSYYNQP (77 aa). The helical transmembrane segment at 307–333 threads the bilayer; the sequence is VFLAGMGLAFLYMTVLGFDCITTGYAY. C326 contacts Fe cation. Residues 334-338 lie on the Extracellular side of the membrane; it reads TQGLS. Residues 339 to 366 form a helical membrane-spanning segment; sequence GSILSVLMGASAITGIMGTVAFTWLRRK. Residues 367 to 368 are Cytoplasmic-facing; the sequence is CG. Residues 369 to 391 form a helical membrane-spanning segment; it reads LVRTGLFSGLAQLSCLILCVISV. Residues 392-452 are Extracellular-facing; the sequence is FMPGSPLDLS…EMSTKSVPII (61 aa). Residues 453-482 traverse the membrane as a helical segment; that stretch reads SVSLLFAGVIAARIGLWSFDLTVTQLLQEN. Residues 483–487 lie on the Cytoplasmic side of the membrane; it reads VIESE. The helical transmembrane segment at 488-512 threads the bilayer; the sequence is RGIINGVQNSMNYLLDLLHFIMVIL. H506 is a Fe cation binding site. Over 513–515 the chain is Extracellular; it reads APN. A helical membrane pass occupies residues 516–541; the sequence is PEAFGLLVLISVSFVAMGHLMYFRFA. The Cytoplasmic portion of the chain corresponds to 542-570; the sequence is QKTLGNQIFVCAPDEKEVTDESQPNTSVV.

This sequence belongs to the ferroportin (FP) (TC 2.A.100) family. SLC40A subfamily. Identified in a complex with STOM. Interacts with HAMP; affinity of the peptide hormone HAMP for SLC40A1 increases by 80-fold in the presence of iron and the interaction promotes SLC40A1 ubiquitination and degradation. Part of a complex composed of SLC40A1/ferroportin, TF/transferrin and HEPH/hephaestin that transfers iron from cells to transferrin. Polyubiquitinated by RNF217; leading to proteasomal degradation. Under conditions of high systemic iron levels, both the hormone peptide hepcidin/HAMP and holo(iron bound)-transferrin/TF induce the ubiquitination, internalization and proteasomal degradation of SLC40A1 to control iron release from cells.

Its subcellular location is the cell membrane. The protein resides in the basolateral cell membrane. The catalysed reaction is Fe(2+)(in) = Fe(2+)(out). Its activity is regulated as follows. During elevated serum iron levels, liver-derived hepcidin/HAMP negatively regulates cell surface SLC40A1 by inducing its ubiquitination, internalization, and degradation. Indeed, hepcidin/HAMP affinity towards ferroportin/SLC40A1 increases by 80-fold in the presence of iron. Its function is as follows. Transports Fe(2+) from the inside of a cell to the outside of the cell, playing a key role for maintaining systemic iron homeostasis. Transports iron from intestinal, splenic, hepatic cells, macrophages and erythrocytes into the blood to provide iron to other tissues. Controls therefore dietary iron uptake, iron recycling by macrophages and erythrocytes, and release of iron stores in hepatocytes. When iron is in excess in serum, circulating HAMP/hepcidin levels increase resulting in a degradation of SLC40A1, thus limiting the iron efflux to plasma. The protein is Ferroportin of Rattus norvegicus (Rat).